The primary structure comprises 1011 residues: Retinoblastoma-related protein (1011 aa).

The tract at residues 1 to 22 (MSQASVDMEDVKPSISLPSDDG) is disordered. Positions 411-612 (TPVSTAMTTA…ERGSSMYNSL (202 aa)) are domain A. Positions 411–860 (TPVSTAMTTA…NEVFIPSVKP (450 aa)) are pocket. The segment at 613–729 (IVARPTLAAE…PAGGGETCAE (117 aa)) is spacer. The tract at residues 730–860 (TGINIFFNKI…NEVFIPSVKP (131 aa)) is domain B. Positions 872–903 (QKSKSSPEDSNNADSQIPGSPRLSPFPNLPDM) are disordered. Residues 873-889 (KSKSSPEDSNNADSQIP) show a composition bias toward polar residues.

The protein belongs to the retinoblastoma protein (RB) family.

The protein localises to the nucleus. Its function is as follows. Regulator of biological processes that recruits a histone deacetylase to control gene transcription. May play a role in the entry into mitosis, negatively regulating the cell proliferation. Formation of stable complexes with geminiviridae replication-associated proteins may create a cellular environment which favors viral DNA replication. This Cocos nucifera (Coconut palm) protein is Retinoblastoma-related protein (Rb1).